Here is a 474-residue protein sequence, read N- to C-terminus: MGSRYPSHQLSNGLFVSGRPEQPKERAPTMSAVAMPYTGGDIKRSGELGKMFDIPADGTKSRKSGPIPGAPSRSGSFAGTAQSGPGAPMATGRMSGSLASAGSVSMKKTNSGPLSKHGEPLKKSSGPQSGGVTRQNSGSIPILPATGLITSGPITSGPLNSSGAPRKVSGPLDSSGLMKSHMPTVVHNQAVTTLGPEDDFSCLKSFPKPVLWLVVLIFIMGFLAGGFILGAVHNPILLVVVAILFTVVAALFIWNICWGRRGITDFIARYPDADLRTAKNGQHVKVTGVVTCGNVPLESSFHRVPRCVYTSTCLYEYRGWGSKPANSSHRHFTWGLRSSERHVVDFYISDFQSGLRALVKTGSGAKVTPLVDDSVVIDFKQGSEQVSPDFVRWLGKKNLTSDDRIMRLKEGYIKEGSTVSVIGVVQRNDNVLMIVPSSEPLAAGWQWRRCTFPTSLEGIVLRCEDSSNVDAIPV.

Positions 1 to 14 are enriched in polar residues; it reads MGSRYPSHQLSNGL. Residues 1-137 are disordered; it reads MGSRYPSHQL…QSGGVTRQNS (137 aa). Ser-45 is modified (phosphoserine). Composition is skewed to polar residues over residues 73 to 83, 97 to 113, and 125 to 137; these read RSGSFAGTAQS, SLAS…NSGP, and SGPQ…RQNS. Ser-169 is modified (phosphoserine). Helical transmembrane passes span 210-230 and 236-256; these read VLWL…FILG and ILLV…IWNI.

It localises to the membrane. This is an uncharacterized protein from Arabidopsis thaliana (Mouse-ear cress).